A 505-amino-acid polypeptide reads, in one-letter code: RNA-splicing ligase RtcB homolog (505 aa).

Mn(2+) is bound by residues Asp119, Cys122, His227, His259, and His353. 226–230 (NHYAE) contacts GMP. Residues 353-354 (HN), 402-405 (GGTM), Ser409, 428-431 (HGAG), and Lys504 contribute to the GMP site. His428 serves as the catalytic GMP-histidine intermediate.

It belongs to the RtcB family. As to quaternary structure, catalytic component of the tRNA-splicing ligase complex. Mn(2+) serves as cofactor.

It catalyses the reaction a 3'-end 3'-phospho-ribonucleotide-RNA + a 5'-end dephospho-ribonucleoside-RNA + GTP = a ribonucleotidyl-ribonucleotide-RNA + GMP + diphosphate. It carries out the reaction a 3'-end 2',3'-cyclophospho-ribonucleotide-RNA + a 5'-end dephospho-ribonucleoside-RNA + GTP + H2O = a ribonucleotidyl-ribonucleotide-RNA + GMP + diphosphate + H(+). Functionally, catalytic subunit of the tRNA-splicing ligase complex that acts by directly joining spliced tRNA halves to mature-sized tRNAs by incorporating the precursor-derived splice junction phosphate into the mature tRNA as a canonical 3',5'-phosphodiester. May act as an RNA ligase with broad substrate specificity, and may function toward other RNAs. The protein is RNA-splicing ligase RtcB homolog of Nematostella vectensis (Starlet sea anemone).